The chain runs to 697 residues: Elongation factor G (697 aa).

The 276-residue stretch at 10–285 (ERTRNIGIMA…AVVDYLPSPL (276 aa)) folds into the tr-type G domain. Residues 19–26 (AHIDAGKT), 83–87 (DTPGH), and 137–140 (NKMD) contribute to the GTP site.

This sequence belongs to the TRAFAC class translation factor GTPase superfamily. Classic translation factor GTPase family. EF-G/EF-2 subfamily.

Its subcellular location is the cytoplasm. Catalyzes the GTP-dependent ribosomal translocation step during translation elongation. During this step, the ribosome changes from the pre-translocational (PRE) to the post-translocational (POST) state as the newly formed A-site-bound peptidyl-tRNA and P-site-bound deacylated tRNA move to the P and E sites, respectively. Catalyzes the coordinated movement of the two tRNA molecules, the mRNA and conformational changes in the ribosome. The protein is Elongation factor G of Pediococcus pentosaceus (strain ATCC 25745 / CCUG 21536 / LMG 10740 / 183-1w).